The primary structure comprises 403 residues: Calcium-responsive transactivator (403 aa).

The N-terminal auto-inhibitory domain stretch occupies residues 1 to 148 (MSVAFASARP…TLPTTTMSMA (148 aa)). An SH2-binding motif is present at residues 50 to 53 (YQQI). Disordered stretches follow at residues 72 to 111 (QSLL…ALGS), 152 to 171 (HGSA…VPMQ), 224 to 303 (NQSS…RTFE), and 318 to 403 (SQQQ…NYQQ). 2 stretches are compositionally biased toward polar residues: residues 92–105 (QTGP…QGNL) and 161–171 (TVPSSQNVPMQ). Positions 149 to 238 (VSTHGSAPGY…GSSMMGQRPL (90 aa)) are methionine-rich intra-molecular domain. The segment covering 224–235 (NQSSQGSSMMGQ) has biased composition (low complexity). The tract at residues 252–324 (YLGQEEYYSE…AQYSQQQTGY (73 aa)) is MFD domain. The span at 263 to 277 (YGHSQGSSEAMTPQY) shows a compositional bias: polar residues. The segment covering 286 to 296 (YSYQQSSYGEQ) has biased composition (low complexity). The tract at residues 341 to 403 (NQQNYPGQQQ…EQGQYGNYQQ (63 aa)) is necessary for nuclear localization. Residues 360–363 (SQYS) carry the SH2-binding motif. Positions 378-386 (TSQTTSTAQ) match the SH3-binding motif. Positions 398 to 401 (YGNY) match the SH2-binding motif.

The protein belongs to the SS18 family. Homodimer.

The protein localises to the nucleus. Transcriptional activator which may be required for calcium-dependent dendritic growth and branching in cortical neurons. This is Calcium-responsive transactivator (ss18l1) from Xenopus laevis (African clawed frog).